Reading from the N-terminus, the 246-residue chain is Ubiquinone/menaquinone biosynthesis C-methyltransferase UbiE (246 aa).

Residues T75, D95, and 119-120 (DA) contribute to the S-adenosyl-L-methionine site.

Belongs to the class I-like SAM-binding methyltransferase superfamily. MenG/UbiE family.

It carries out the reaction a 2-demethylmenaquinol + S-adenosyl-L-methionine = a menaquinol + S-adenosyl-L-homocysteine + H(+). The enzyme catalyses a 2-methoxy-6-(all-trans-polyprenyl)benzene-1,4-diol + S-adenosyl-L-methionine = a 5-methoxy-2-methyl-3-(all-trans-polyprenyl)benzene-1,4-diol + S-adenosyl-L-homocysteine + H(+). It participates in quinol/quinone metabolism; menaquinone biosynthesis; menaquinol from 1,4-dihydroxy-2-naphthoate: step 2/2. The protein operates within cofactor biosynthesis; ubiquinone biosynthesis. Its function is as follows. Methyltransferase required for the conversion of demethylmenaquinol (DMKH2) to menaquinol (MKH2) and the conversion of 2-polyprenyl-6-methoxy-1,4-benzoquinol (DDMQH2) to 2-polyprenyl-3-methyl-6-methoxy-1,4-benzoquinol (DMQH2). The chain is Ubiquinone/menaquinone biosynthesis C-methyltransferase UbiE from Desulfotalea psychrophila (strain LSv54 / DSM 12343).